The following is a 696-amino-acid chain: Methionine--tRNA ligase (696 aa).

The 'HIGH' region motif lies at 12 to 22; sequence PYANGPLHLGH. Residues Cys143, Cys146, Cys156, and Cys159 each coordinate Zn(2+). Residues 330–334 carry the 'KMSKS' region motif; sequence KMSKS. Lys333 is a binding site for ATP. Residues 593–696 enclose the tRNA-binding domain; sequence DFAKLDLRIG…AGAQPGMPVR (104 aa).

Belongs to the class-I aminoacyl-tRNA synthetase family. MetG type 1 subfamily. In terms of assembly, homodimer. Zn(2+) serves as cofactor.

It is found in the cytoplasm. The enzyme catalyses tRNA(Met) + L-methionine + ATP = L-methionyl-tRNA(Met) + AMP + diphosphate. Is required not only for elongation of protein synthesis but also for the initiation of all mRNA translation through initiator tRNA(fMet) aminoacylation. In Xanthomonas campestris pv. campestris (strain 8004), this protein is Methionine--tRNA ligase.